A 340-amino-acid chain; its full sequence is Dihydroorotate dehydrogenase (quinone) (340 aa).

FMN contacts are provided by residues 62-66 (AGLDK) and threonine 86. Lysine 66 contacts substrate. Substrate is bound at residue 111-115 (NRMGF). FMN contacts are provided by asparagine 139 and asparagine 172. Position 172 (asparagine 172) interacts with substrate. Serine 175 (nucleophile) is an active-site residue. Asparagine 177 lines the substrate pocket. Residues lysine 217 and threonine 245 each contribute to the FMN site. 246–247 (NT) lines the substrate pocket. Residues glycine 268, glycine 297, and 318–319 (YS) each bind FMN.

Belongs to the dihydroorotate dehydrogenase family. Type 2 subfamily. As to quaternary structure, monomer. Requires FMN as cofactor.

The protein localises to the cell membrane. The catalysed reaction is (S)-dihydroorotate + a quinone = orotate + a quinol. Its pathway is pyrimidine metabolism; UMP biosynthesis via de novo pathway; orotate from (S)-dihydroorotate (quinone route): step 1/1. Functionally, catalyzes the conversion of dihydroorotate to orotate with quinone as electron acceptor. The polypeptide is Dihydroorotate dehydrogenase (quinone) (Alkalilimnicola ehrlichii (strain ATCC BAA-1101 / DSM 17681 / MLHE-1)).